The chain runs to 541 residues: uncharacterized protein (541 aa).

The N-terminal stretch at 1 to 22 is a signal peptide; it reads MQFKYGALIFSGFLGLSIVLAS. Cys-23 carries the N-palmitoyl cysteine lipid modification. The S-diacylglycerol cysteine moiety is linked to residue Cys-23. Disordered regions lie at residues 446-468 and 480-514; these read APGQ…NGNL and KTKT…TENQ. Over residues 448–460 the composition is skewed to low complexity; it reads GQSSQKEGGQQQS. Residues 480–490 show a composition bias toward basic and acidic residues; the sequence is KTKTEVKKTED.

Belongs to the MG185/MG260 family.

Its subcellular location is the cell membrane. This is an uncharacterized protein from Mycoplasma pneumoniae (strain ATCC 29342 / M129 / Subtype 1) (Mycoplasmoides pneumoniae).